The primary structure comprises 385 residues: Palmitoyl-[acyl-carrier-protein] 4-desaturase, chloroplastic (385 aa).

A chloroplast-targeting transit peptide spans 1-36 (MAMKLNALMTLQCPKRNMFTRIAPPQAGRVRSKVSM). Glutamate 126, glutamate 164, histidine 167, glutamate 217, glutamate 250, and histidine 253 together coordinate Fe cation.

This sequence belongs to the fatty acid desaturase type 2 family. In terms of assembly, homodimer. Fe(2+) is required as a cofactor. In terms of tissue distribution, found only in tissues which synthesize petroselinic acid, such as developing seeds.

Its subcellular location is the plastid. The protein localises to the chloroplast. It carries out the reaction hexadecanoyl-[ACP] + 2 reduced [2Fe-2S]-[ferredoxin] + O2 + 2 H(+) = (4Z)-hexadecenoyl-[ACP] + 2 oxidized [2Fe-2S]-[ferredoxin] + 2 H2O. Its function is as follows. Converts palmitoyl-ACP to (4Z)-hexadec-4-enoyl-ACP by introduction of a cis double bond between carbons 4 and 5 of the acyl chain. This is Palmitoyl-[acyl-carrier-protein] 4-desaturase, chloroplastic from Coriandrum sativum (Coriander).